A 141-amino-acid polypeptide reads, in one-letter code: Hemoglobin subunit alpha (141 aa).

The region spanning 1–141 (VLSPADKTNV…VSTVLTSKYR (141 aa)) is the Globin domain. The residue at position 3 (serine 3) is a Phosphoserine. N6-succinyllysine is present on lysine 7. Position 8 is a phosphothreonine (threonine 8). N6-succinyllysine is present on lysine 11. Serine 35 is subject to Phosphoserine. An N6-succinyllysine modification is found at lysine 40. Residue serine 49 is modified to Phosphoserine. O2 is bound at residue histidine 58. Histidine 87 contacts heme b. Serine 102 is modified (phosphoserine). Threonine 108 carries the post-translational modification Phosphothreonine. Serine 124 carries the phosphoserine modification. Residues threonine 134 and threonine 137 each carry the phosphothreonine modification. A Phosphoserine modification is found at serine 138.

The protein belongs to the globin family. In terms of assembly, heterotetramer of two alpha chains and two beta chains. In terms of tissue distribution, red blood cells.

Functionally, involved in oxygen transport from the lung to the various peripheral tissues. Hemopressin acts as an antagonist peptide of the cannabinoid receptor CNR1. Hemopressin-binding efficiently blocks cannabinoid receptor CNR1 and subsequent signaling. This chain is Hemoglobin subunit alpha (HBA), found in Eulemur fulvus fulvus (Brown lemur).